The chain runs to 288 residues: Protease HtpX (288 aa).

Helical transmembrane passes span 5–25 (IALFLATNLAVLILASIVMSL) and 34–54 (SGLLVMAGIFGFGGSFISLLL). His-140 contributes to the Zn(2+) binding site. Residue Glu-141 is part of the active site. Zn(2+) is bound at residue His-144. Transmembrane regions (helical) follow at residues 155 to 175 (LLQGVLNTFVIVLARVVGGII) and 190 to 210 (FAYFIIVFVLEMVFGLFATMI). Glu-219 contacts Zn(2+).

It belongs to the peptidase M48B family. The cofactor is Zn(2+).

The protein resides in the cell inner membrane. In Stenotrophomonas maltophilia (strain R551-3), this protein is Protease HtpX.